Here is a 144-residue protein sequence, read N- to C-terminus: Large ribosomal subunit protein uL14 (144 aa).

The interval Asn107–Arg144 is disordered.

The protein belongs to the universal ribosomal protein uL14 family. Part of the 50S ribosomal subunit. Forms a cluster with proteins L3 and L19. In the 70S ribosome, L14 and L19 interact and together make contacts with the 16S rRNA in bridges B5 and B8.

Its function is as follows. Binds to 23S rRNA. Forms part of two intersubunit bridges in the 70S ribosome. In Xanthobacter autotrophicus (strain ATCC BAA-1158 / Py2), this protein is Large ribosomal subunit protein uL14.